The primary structure comprises 253 residues: Dehydration-responsive element-binding protein 1D (253 aa).

Over residues 1–22 (MEKNTAASGQLMTSSAEATPSS) the composition is skewed to polar residues. Positions 1–31 (MEKNTAASGQLMTSSAEATPSSPKRPAGRTK) are disordered. Positions 39–98 (VFRGVRWRGCAGRWVCKVRVPGSRGDRFWIGTSDTAEETARTHDAAMLALCGASASLNFA) form a DNA-binding region, AP2/ERF. Residues 131–153 (RRVPAPGRGSTATATATSGDAAS) are disordered. The span at 134–153 (PAPGRGSTATATATSGDAAS) shows a compositional bias: low complexity.

This sequence belongs to the AP2/ERF transcription factor family. ERF subfamily.

It is found in the nucleus. Its function is as follows. Transcriptional activator that binds specifically to the DNA sequence 5'-[AG]CCGAC-3'. Binding to the C-repeat/DRE element mediates high salinity- and dehydration-inducible transcription. This is Dehydration-responsive element-binding protein 1D (DREB1D) from Oryza sativa subsp. indica (Rice).